The sequence spans 370 residues: GTPase Obg (370 aa).

The region spanning 1 to 159 is the Obg domain; it reads MKFIDEARIE…RMLRLELKVL (159 aa). The OBG-type G domain maps to 160 to 334; it reads ADVGLLGMPN…LCYAIYDYLA (175 aa). GTP contacts are provided by residues 166–173, 191–195, 213–216, 284–287, and 315–317; these read GMPNAGKS, FTTLA, DIPG, NKLD, and SAL. Mg(2+) contacts are provided by serine 173 and threonine 193. The interval 344–370 is disordered; it reads EEEDLATDVRFRDAPPADGGATPGDDA.

Belongs to the TRAFAC class OBG-HflX-like GTPase superfamily. OBG GTPase family. As to quaternary structure, monomer. The cofactor is Mg(2+).

The protein localises to the cytoplasm. In terms of biological role, an essential GTPase which binds GTP, GDP and possibly (p)ppGpp with moderate affinity, with high nucleotide exchange rates and a fairly low GTP hydrolysis rate. Plays a role in control of the cell cycle, stress response, ribosome biogenesis and in those bacteria that undergo differentiation, in morphogenesis control. The protein is GTPase Obg of Burkholderia ambifaria (strain ATCC BAA-244 / DSM 16087 / CCUG 44356 / LMG 19182 / AMMD) (Burkholderia cepacia (strain AMMD)).